Consider the following 733-residue polypeptide: Submandibular gland protein C (733 aa).

The N-terminal stretch at 1–20 is a signal peptide; sequence MKLILLYLAVVLCFVGKARS. A disordered region spans residues 48 to 91; sequence KSSGGSKDYNLSDGGKSNSRKNLSPATGGSATQQSNLDDSHAPN. N-linked (GlcNAc...) asparagine glycosylation occurs at Asn57. Over residues 62–84 the composition is skewed to polar residues; it reads GKSNSRKNLSPATGGSATQQSNL. Asn141 and Asn187 each carry an N-linked (GlcNAc...) asparagine glycan. Disordered regions lie at residues 172–204, 249–330, 369–450, and 496–733; these read GQQAAASGGSKHNVENSSLSTGSATSNKGADKP, LTED…NSSN, and SVTE…PSVA. Positions 186–199 are enriched in polar residues; that stretch reads ENSSLSTGSATSNK. Residues 256-270 are compositionally biased toward low complexity; sequence TSTSASVSGDSSTSS. The span at 300–318 shows a compositional bias: polar residues; it reads GSKQNVEDSTLSTGSATSN. A glycan (N-linked (GlcNAc...) asparagine) is linked at Asn327. Positions 376–390 are enriched in low complexity; sequence TSTSASVSGDSSTSS. Over residues 420–438 the composition is skewed to polar residues; that stretch reads GSKQNVEDSTLSTGSATSN. Residues Asn447, Asn514, and Asn528 are each glycosylated (N-linked (GlcNAc...) asparagine). Composition is skewed to polar residues over residues 496 to 516 and 525 to 535; these read SVTEASQSAERPNAQSSNNLS and NPTNGSSSASS. The segment covering 538–552 has biased composition (basic and acidic residues); the sequence is KPYEEGMRKLLKFLE. Composition is skewed to low complexity over residues 563-574 and 609-619; these read SVSGMSSESSRS and SSNSSTGSATS. N-linked (GlcNAc...) asparagine glycosylation is present at Asn611. A compositionally biased stretch (gly residues) spans 654–665; the sequence is GFNGPEGVGENN. Residues 677-701 show a composition bias toward low complexity; the sequence is GSKSDSGSHNLSSGSGSRSNVSTGG. 2 N-linked (GlcNAc...) asparagine glycosylation sites follow: Asn686 and Asn696. Polar residues predominate over residues 722–733; that stretch reads TGKTQSGSPSVA.

Post-translationally, N-glycosylated. As to expression, detected in terminal tubule cells of the submandibular gland (at protein level). Expressed in submandibular salivary glands of 3-day-old males but not adults. Expression in adult submandibular glands is restricted to females. Isoform 5 is expressed in both 3-day-old and adult sublingual glands.

It localises to the secreted. In Mus musculus (Mouse), this protein is Submandibular gland protein C (Muc19).